The primary structure comprises 379 residues: MSRDDNGWSKLYPDLLRSIFESLSCLDFHRAGTVCSNWYAVSRSCPLYPWRIVFRGKNSVLFDPIQDKIYTKNLLGIDLSKIHCLASYGNWILIVDPRLDFYLLNVFTRETINLPSLESSLRGDRPFRFIRNDDESGYFLELYGTKFLLTWNDFRFEKTAILWVNGRNGDYVVAWAIKQFYIFSYKKIGNDDDDKRWSITCTQCEDMAYKDNKLYVYTFDHYINILDFSGNSPKEPMEENPYLSHPFSFVDAIYKLRLAVTREGKVLIVLSLVGLDKKICIYKLNLKIGDWEIVESLGDEMLIFGHGVTIRAPDKDISGGGLKSDSICFLYDDYLSDHYLTMKRQPICGVFDLATSTITWHTRLEDLSSKICWFVPGCA.

Residues 6–53 enclose the F-box domain; it reads NGWSKLYPDLLRSIFESLSCLDFHRAGTVCSNWYAVSRSCPLYPWRIV.

This Arabidopsis thaliana (Mouse-ear cress) protein is Putative F-box protein At2g33190.